A 192-amino-acid polypeptide reads, in one-letter code: Xanthine phosphoribosyltransferase (192 aa).

Xanthine-binding residues include L20 and T26. Residue 127–131 (ANGQA) coordinates 5-phospho-alpha-D-ribose 1-diphosphate. K155 lines the xanthine pocket.

It belongs to the purine/pyrimidine phosphoribosyltransferase family. Xpt subfamily. Homodimer.

Its subcellular location is the cytoplasm. It carries out the reaction XMP + diphosphate = xanthine + 5-phospho-alpha-D-ribose 1-diphosphate. Its pathway is purine metabolism; XMP biosynthesis via salvage pathway; XMP from xanthine: step 1/1. Its function is as follows. Converts the preformed base xanthine, a product of nucleic acid breakdown, to xanthosine 5'-monophosphate (XMP), so it can be reused for RNA or DNA synthesis. The chain is Xanthine phosphoribosyltransferase from Streptococcus thermophilus.